The chain runs to 331 residues: Phosphate acyltransferase (331 aa).

The protein belongs to the PlsX family. In terms of assembly, homodimer. Probably interacts with PlsY.

It is found in the cytoplasm. The enzyme catalyses a fatty acyl-[ACP] + phosphate = an acyl phosphate + holo-[ACP]. It functions in the pathway lipid metabolism; phospholipid metabolism. Functionally, catalyzes the reversible formation of acyl-phosphate (acyl-PO(4)) from acyl-[acyl-carrier-protein] (acyl-ACP). This enzyme utilizes acyl-ACP as fatty acyl donor, but not acyl-CoA. The protein is Phosphate acyltransferase of Malacoplasma penetrans (strain HF-2) (Mycoplasma penetrans).